The following is a 293-amino-acid chain: Ribosomal protein L11 methyltransferase (293 aa).

4 residues coordinate S-adenosyl-L-methionine: threonine 145, glycine 166, aspartate 188, and asparagine 230.

Belongs to the methyltransferase superfamily. PrmA family.

The protein localises to the cytoplasm. It catalyses the reaction L-lysyl-[protein] + 3 S-adenosyl-L-methionine = N(6),N(6),N(6)-trimethyl-L-lysyl-[protein] + 3 S-adenosyl-L-homocysteine + 3 H(+). Functionally, methylates ribosomal protein L11. The polypeptide is Ribosomal protein L11 methyltransferase (Shewanella baltica (strain OS185)).